We begin with the raw amino-acid sequence, 137 residues long: Ribonuclease P protein component (137 aa).

It belongs to the RnpA family. Consists of a catalytic RNA component (M1 or rnpB) and a protein subunit.

It catalyses the reaction Endonucleolytic cleavage of RNA, removing 5'-extranucleotides from tRNA precursor.. Functionally, RNaseP catalyzes the removal of the 5'-leader sequence from pre-tRNA to produce the mature 5'-terminus. It can also cleave other RNA substrates such as 4.5S RNA. The protein component plays an auxiliary but essential role in vivo by binding to the 5'-leader sequence and broadening the substrate specificity of the ribozyme. In Porphyromonas gingivalis (strain ATCC 33277 / DSM 20709 / CIP 103683 / JCM 12257 / NCTC 11834 / 2561), this protein is Ribonuclease P protein component.